The sequence spans 324 residues: tRNA uridine(34) hydroxylase (324 aa).

Positions 145 to 239 (NDKKTIFIDM…YVHDARKNGL (95 aa)) constitute a Rhodanese domain. C199 acts as the Cysteine persulfide intermediate in catalysis.

Belongs to the TrhO family.

It catalyses the reaction uridine(34) in tRNA + AH2 + O2 = 5-hydroxyuridine(34) in tRNA + A + H2O. In terms of biological role, catalyzes oxygen-dependent 5-hydroxyuridine (ho5U) modification at position 34 in tRNAs. The polypeptide is tRNA uridine(34) hydroxylase (Buchnera aphidicola subsp. Acyrthosiphon pisum (strain Tuc7)).